The chain runs to 490 residues: tRNA-guanine(15) transglycosylase (490 aa).

Asp90 functions as the Nucleophile in the catalytic mechanism. Residues Asp125 and Ala193 each coordinate substrate. Cys276, Cys278, and Cys281 together coordinate Zn(2+).

Belongs to the archaeosine tRNA-ribosyltransferase family. It depends on Zn(2+) as a cofactor.

It carries out the reaction guanosine(15) in tRNA + 7-cyano-7-deazaguanine = 7-cyano-7-carbaguanosine(15) in tRNA + guanine. It participates in tRNA modification; archaeosine-tRNA biosynthesis. Its function is as follows. Exchanges the guanine residue with 7-cyano-7-deazaguanine (preQ0) at position 15 in the dihydrouridine loop (D-loop) of archaeal tRNAs. This Methanosarcina acetivorans (strain ATCC 35395 / DSM 2834 / JCM 12185 / C2A) protein is tRNA-guanine(15) transglycosylase.